Here is a 445-residue protein sequence, read N- to C-terminus: Ribosomal protein uS12 methylthiotransferase RimO (445 aa).

The 116-residue stretch at 4–119 (YKVGMVSLGC…INEAIMNFIN (116 aa)) folds into the MTTase N-terminal domain. [4Fe-4S] cluster contacts are provided by C13, C48, C82, C157, C161, and C164. Residues 143–373 (TTDKATAYLR…MLLQKEVSEE (231 aa)) enclose the Radical SAM core domain. A TRAM domain is found at 376 to 441 (KNKVGREYDV…EYDLVGVVCN (66 aa)).

It belongs to the methylthiotransferase family. RimO subfamily. The cofactor is [4Fe-4S] cluster.

The protein resides in the cytoplasm. It carries out the reaction L-aspartate(89)-[ribosomal protein uS12]-hydrogen + (sulfur carrier)-SH + AH2 + 2 S-adenosyl-L-methionine = 3-methylsulfanyl-L-aspartate(89)-[ribosomal protein uS12]-hydrogen + (sulfur carrier)-H + 5'-deoxyadenosine + L-methionine + A + S-adenosyl-L-homocysteine + 2 H(+). Its function is as follows. Catalyzes the methylthiolation of an aspartic acid residue of ribosomal protein uS12. The protein is Ribosomal protein uS12 methylthiotransferase RimO of Clostridium perfringens (strain 13 / Type A).